Consider the following 222-residue polypeptide: 25 kDa elongation factor 1-beta (222 aa).

Residues 75–94 show a composition bias toward low complexity; sequence TSASAPAKQAPKKAASAPAK. Residues 75–98 form a disordered region; the sequence is TSASAPAKQAPKKAASAPAKQADE.

This sequence belongs to the EF-1-beta/EF-1-delta family. As to quaternary structure, EF-1 is composed of 4 subunits: alpha, beta, delta, and gamma.

Functionally, EF-1-beta and EF-1-delta stimulate the exchange of GDP bound to EF-1-alpha to GTP. This is 25 kDa elongation factor 1-beta from Trypanosoma cruzi.